The chain runs to 396 residues: Proteasome-activating nucleotidase (396 aa).

Residues 16-57 (VTYLKRRIRQLELQVRMLEADKERLERELSRLRSEMSRLRQP) are a coiled coil. ATP-binding positions include 181–186 (GCGKTL) and H320. A docks into pockets in the proteasome alpha-ring to cause gate opening region spans residues 394-396 (IYG).

It belongs to the AAA ATPase family. In terms of assembly, homohexamer. The hexameric complex has a two-ring architecture resembling a top hat that caps the 20S proteasome core at one or both ends. Upon ATP-binding, the C-terminus of PAN interacts with the alpha-rings of the proteasome core by binding to the intersubunit pockets.

It is found in the cytoplasm. ATPase which is responsible for recognizing, binding, unfolding and translocation of substrate proteins into the archaeal 20S proteasome core particle. Is essential for opening the gate of the 20S proteasome via an interaction with its C-terminus, thereby allowing substrate entry and access to the site of proteolysis. Thus, the C-termini of the proteasomal ATPase function like a 'key in a lock' to induce gate opening and therefore regulate proteolysis. Unfolding activity requires energy from ATP hydrolysis, whereas ATP binding alone promotes ATPase-20S proteasome association which triggers gate opening, and supports translocation of unfolded substrates. The polypeptide is Proteasome-activating nucleotidase (Pyrococcus furiosus (strain ATCC 43587 / DSM 3638 / JCM 8422 / Vc1)).